Consider the following 107-residue polypeptide: Pre-mRNA-splicing factor RDS3 (107 aa).

The protein belongs to the PHF5 family. In terms of assembly, component of the spliceosome where it interacts with CUS1, HSH49, HSH155, IST3 and RSE1. Also interacts with YRA1.

It localises to the nucleus. Functionally, required for pre-mRNA splicing. Involved in regulation of drug sensitivity and may play a role in multidrug resistance. This Saccharomyces cerevisiae (strain ATCC 204508 / S288c) (Baker's yeast) protein is Pre-mRNA-splicing factor RDS3 (RDS3).